The chain runs to 286 residues: Sulfate transport system permease protein CysW (286 aa).

6 consecutive transmembrane segments (helical) span residues 20–40 (LLPL…IIIP), 74–94 (LMGV…AFAI), 108–128 (VIDL…VLLY), 145–165 (IIFA…PFVA), 207–227 (LYGV…VSVV), and 255–275 (YTAA…KALL). Residues 69–272 (IRLTLLMGVI…GISLVTLVLK (204 aa)) enclose the ABC transmembrane type-1 domain.

The protein belongs to the binding-protein-dependent transport system permease family. CysTW subfamily. As to quaternary structure, the complex is composed of two ATP-binding proteins (CysA), two transmembrane proteins (CysT and CysW) and a solute-binding protein (CysP).

The protein localises to the cell inner membrane. Functionally, part of the ABC transporter complex CysAWTP (TC 3.A.1.6.1) involved in sulfate/thiosulfate import. Probably responsible for the translocation of the substrate across the membrane. In Synechococcus elongatus (strain ATCC 33912 / PCC 7942 / FACHB-805) (Anacystis nidulans R2), this protein is Sulfate transport system permease protein CysW (cysW).